The sequence spans 269 residues: 2-dehydro-3-deoxyphosphooctonate aldolase (269 aa).

The protein belongs to the KdsA family.

The protein resides in the cytoplasm. The catalysed reaction is D-arabinose 5-phosphate + phosphoenolpyruvate + H2O = 3-deoxy-alpha-D-manno-2-octulosonate-8-phosphate + phosphate. It participates in carbohydrate biosynthesis; 3-deoxy-D-manno-octulosonate biosynthesis; 3-deoxy-D-manno-octulosonate from D-ribulose 5-phosphate: step 2/3. It functions in the pathway bacterial outer membrane biogenesis; lipopolysaccharide biosynthesis. The sequence is that of 2-dehydro-3-deoxyphosphooctonate aldolase (kdsA) from Chlamydia pneumoniae (Chlamydophila pneumoniae).